Here is a 962-residue protein sequence, read N- to C-terminus: MAVLRVPVSWLLEYVHTQTGFVGETGIRSDTRRTHTDCPVAEDILESLLSVGFEGEILDRPELSGPIVVGRVLDFTEEVHSNGKTIRWCKVRVCAPVQPNNTPLSKDCNPSTQTGNFSNADTNSALETRDIVCGASNFSKGDLVVVTLPGSNLPGGFHVTARKVYGHLSDGMIASEKELGVGDNHDGILRLAEVFQGDELSKIREGDNALDLLALTDSAVAVSITPDRGYAMSIRGIAREYALANNIPFSDPLPDDVLPAGGLSIDLRCKPNAFFTLLIQEIENNQTPQWMVRRLQLAGIRSVCPVVDITNYVMVETGQPLHAYDYDAIQGSLCVRTADKKETLDTIDGRRLELHTDDLVVADANGVLSLAGVIGGSRSRVTSDTKRILLEAGNFNPIDISLSSRRHKLYTEASARFARSVDILIAQRALARAAELIRDLASGDITELGSAYINYTQQSPILLSTLDIERVVGCCFTREEIMSSLRAIGCDVSCDSDHSTPDTQVMLVTPPSFRADLVNVQDLAEEVIRVIGFNRIPSLRLSVPHREQPLQSQQYKLENGKLENGYTLSPVTPPRTPPVTFEQRRLLGQSLAACGHVEVICYPFVNLAAAGICHIDVTHNPDSTHNPDSGSDPIIPTGVTRITEPGSSGVSGPGNVGVKEKCSADTSIEHAPTTRAISLHNPIDATEGYLRRSLIPGLLQCAHRNLSRGLCDLSIFEIGRVFLGQLRTSNLIGCNSDSTCNACSRKNTIESMNEVYQPYTVSVLQTGSAIQKQPYTEGRKYDLADVFDSARQIARGLGVDFHFVQDKHPAFHPGRCAKVICKHHHIGYTGQILPTLANKHNLPDNVFACEINLDLVAQLGCSQEIVKTLPTSPAATQHLTLTLGNNIAAASVISVVKEGAGELLEDIRLIDEYKHEESDKKSLTFAMRFRDKEKTLTAQRVNLAKENAVRLASSKFGAIMRR.

Positions 85 to 201 constitute a tRNA-binding domain; it reads TIRWCKVRVC…AEVFQGDELS (117 aa). The region spanning 456–538 is the B5 domain; that stretch reads TQQSPILLST…RVIGFNRIPS (83 aa). 4 residues coordinate Mg(2+): Asp516, Asp522, Glu525, and Glu526. Residues 621–675 form an insert region; that stretch reads PDSTHNPDSGSDPIIPTGVTRITEPGSSGVSGPGNVGVKEKCSADTSIEHAPTTR. Positions 870–961 constitute an FDX-ACB domain; that stretch reads PTSPAATQHL…ASSKFGAIMR (92 aa).

The protein belongs to the phenylalanyl-tRNA synthetase beta subunit family. Type 1 subfamily. Tetramer of two alpha and two beta subunits. Mg(2+) is required as a cofactor.

The protein localises to the cytoplasm. It catalyses the reaction tRNA(Phe) + L-phenylalanine + ATP = L-phenylalanyl-tRNA(Phe) + AMP + diphosphate + H(+). The polypeptide is Phenylalanine--tRNA ligase beta subunit (Tropheryma whipplei (strain Twist) (Whipple's bacillus)).